The chain runs to 214 residues: Holliday junction branch migration complex subunit RuvA (214 aa).

The tract at residues 1–68 is domain I; the sequence is MIGFLQGKVL…QPKPVLIGFD (68 aa). The interval 69–146 is domain II; sequence SAEEKDFFQL…RFLLAADEAG (78 aa). A flexible linker region spans residues 147–160; it reads AGDGVSKTGTPSLP. Residues 161-214 are domain III; it reads IQKAIDQVVDVLVQQLGHTPSAAKMMVAQALDRDPEIMTPEALFDEVYKGDVDA.

It belongs to the RuvA family. Homotetramer. Forms an RuvA(8)-RuvB(12)-Holliday junction (HJ) complex. HJ DNA is sandwiched between 2 RuvA tetramers; dsDNA enters through RuvA and exits via RuvB. An RuvB hexamer assembles on each DNA strand where it exits the tetramer. Each RuvB hexamer is contacted by two RuvA subunits (via domain III) on 2 adjacent RuvB subunits; this complex drives branch migration. In the full resolvosome a probable DNA-RuvA(4)-RuvB(12)-RuvC(2) complex forms which resolves the HJ.

It localises to the cytoplasm. Functionally, the RuvA-RuvB-RuvC complex processes Holliday junction (HJ) DNA during genetic recombination and DNA repair, while the RuvA-RuvB complex plays an important role in the rescue of blocked DNA replication forks via replication fork reversal (RFR). RuvA specifically binds to HJ cruciform DNA, conferring on it an open structure. The RuvB hexamer acts as an ATP-dependent pump, pulling dsDNA into and through the RuvAB complex. HJ branch migration allows RuvC to scan DNA until it finds its consensus sequence, where it cleaves and resolves the cruciform DNA. The polypeptide is Holliday junction branch migration complex subunit RuvA (Desulforapulum autotrophicum (strain ATCC 43914 / DSM 3382 / VKM B-1955 / HRM2) (Desulfobacterium autotrophicum)).